Reading from the N-terminus, the 525-residue chain is Probable metalloreductase AIM14 (525 aa).

The next 7 membrane-spanning stretches (helical) occupy residues 13 to 33 (NIKY…YIAV), 52 to 72 (PLWL…VIHV), 82 to 102 (FGRL…RPSP), 118 to 138 (LGRL…VHFV), 152 to 172 (FLGV…LPFF), 179 to 199 (LFYT…IFHA), and 203 to 223 (VGWL…YRVL). In terms of domain architecture, Ferric oxidoreductase spans 82-194 (FGRLCYALLP…YLSAWFVAIA (113 aa)). The region spanning 215-344 (GSSLLYRVLA…GGAGISFALP (130 aa)) is the FAD-binding FR-type domain. The interval 407 to 478 (LLSEDMEMEE…YHDGRPQPAD (72 aa)) is disordered. Over residues 410-438 (EDMEMEEIGQEDEDRERDELDDLLSEDEG) the composition is skewed to acidic residues. Over residues 453-463 (GKDQDNGKREA) the composition is skewed to basic and acidic residues.

This sequence belongs to the ferric reductase (FRE) family. AIM14 subfamily.

It localises to the membrane. In terms of biological role, probable cell surface metalloreductase. May be involved in iron or copper homeostasis. This is Probable metalloreductase AIM14 (AIM14) from Yarrowia lipolytica (strain CLIB 122 / E 150) (Yeast).